A 309-amino-acid polypeptide reads, in one-letter code: MGINFDVSRPKARSSINMTTKFHTIGLIGKPHHPGTNQTLKRLHHWLTVQGYEVLVEERVASELGTNIIAVDLLEIGARCDLAIVVGGDGNMLGAARVLARFDVGVIGVNRGNLGFLTDLPPDAFEEALAKVLDGEFDTEHRFLLEAEVYRHGMLKASNTAVNEAVLHPGKIAHMIEFEVYIDNQFMYSQRADGMIVSTPTGSTAYALSAGGAILTPNLQALILVPMFPHTLSCRPIVVDACSTIKMVVSPENGENLEVSCDGHVHLAVLPGDEIIVRRSSEQLRLIHPKGHNYFHVLRSKLGWGSKLF.

D89 serves as the catalytic Proton acceptor. NAD(+) contacts are provided by residues 89–90 (DG), 163–164 (NE), H174, R191, D193, and 204–209 (TAYALS).

Belongs to the NAD kinase family. A divalent metal cation is required as a cofactor.

Its subcellular location is the cytoplasm. The catalysed reaction is NAD(+) + ATP = ADP + NADP(+) + H(+). Involved in the regulation of the intracellular balance of NAD and NADP, and is a key enzyme in the biosynthesis of NADP. Catalyzes specifically the phosphorylation on 2'-hydroxyl of the adenosine moiety of NAD to yield NADP. The sequence is that of NAD kinase from Shewanella sp. (strain ANA-3).